Consider the following 207-residue polypeptide: 8-oxoguanine DNA glycosylase/AP lyase (207 aa).

Residues Lys-128 and Asp-146 contribute to the active site.

This sequence belongs to the type-2 OGG1 family.

It catalyses the reaction 2'-deoxyribonucleotide-(2'-deoxyribose 5'-phosphate)-2'-deoxyribonucleotide-DNA = a 3'-end 2'-deoxyribonucleotide-(2,3-dehydro-2,3-deoxyribose 5'-phosphate)-DNA + a 5'-end 5'-phospho-2'-deoxyribonucleoside-DNA + H(+). Functionally, catalyzes the excision of an oxidatively damaged form of guanine (7,8-dihydro-8-oxoguanine = 8-oxoG) from DNA. Also cleaves the DNA backbone at apurinic/apyrimidinic sites (AP sites). This Saccharolobus islandicus (strain Y.N.15.51 / Yellowstone #2) (Sulfolobus islandicus) protein is 8-oxoguanine DNA glycosylase/AP lyase.